The following is a 469-amino-acid chain: UDP-N-acetylmuramate--L-alanine ligase (469 aa).

ATP is bound at residue 123 to 129; sequence GSHGKTT.

This sequence belongs to the MurCDEF family.

Its subcellular location is the cytoplasm. The enzyme catalyses UDP-N-acetyl-alpha-D-muramate + L-alanine + ATP = UDP-N-acetyl-alpha-D-muramoyl-L-alanine + ADP + phosphate + H(+). It participates in cell wall biogenesis; peptidoglycan biosynthesis. Cell wall formation. The sequence is that of UDP-N-acetylmuramate--L-alanine ligase from Synechococcus sp. (strain CC9605).